Here is a 360-residue protein sequence, read N- to C-terminus: Phospho-N-acetylmuramoyl-pentapeptide-transferase (360 aa).

10 helical membrane passes run 24–44, 69–89, 92–112, 133–153, 158–178, 199–219, 239–259, 263–283, 288–308, and 337–357; these read RAVM…PWTI, GTPT…TLLW, WANP…ALGF, MVWQ…LAAN, ILIV…GFLV, GLAT…AYVS, VAIF…FNAY, VFMG…VAVI, FVLV…MLQV, and QVVV…LSTL.

This sequence belongs to the glycosyltransferase 4 family. MraY subfamily. Mg(2+) serves as cofactor.

It localises to the cell inner membrane. It carries out the reaction UDP-N-acetyl-alpha-D-muramoyl-L-alanyl-gamma-D-glutamyl-meso-2,6-diaminopimeloyl-D-alanyl-D-alanine + di-trans,octa-cis-undecaprenyl phosphate = di-trans,octa-cis-undecaprenyl diphospho-N-acetyl-alpha-D-muramoyl-L-alanyl-D-glutamyl-meso-2,6-diaminopimeloyl-D-alanyl-D-alanine + UMP. The protein operates within cell wall biogenesis; peptidoglycan biosynthesis. Functionally, catalyzes the initial step of the lipid cycle reactions in the biosynthesis of the cell wall peptidoglycan: transfers peptidoglycan precursor phospho-MurNAc-pentapeptide from UDP-MurNAc-pentapeptide onto the lipid carrier undecaprenyl phosphate, yielding undecaprenyl-pyrophosphoryl-MurNAc-pentapeptide, known as lipid I. This chain is Phospho-N-acetylmuramoyl-pentapeptide-transferase, found in Neisseria meningitidis serogroup C (strain 053442).